The following is a 372-amino-acid chain: Tetraacyldisaccharide 4'-kinase (372 aa).

60–67 (TVGGSGKT) provides a ligand contact to ATP.

It belongs to the LpxK family.

It catalyses the reaction a lipid A disaccharide + ATP = a lipid IVA + ADP + H(+). It functions in the pathway glycolipid biosynthesis; lipid IV(A) biosynthesis; lipid IV(A) from (3R)-3-hydroxytetradecanoyl-[acyl-carrier-protein] and UDP-N-acetyl-alpha-D-glucosamine: step 6/6. Functionally, transfers the gamma-phosphate of ATP to the 4'-position of a tetraacyldisaccharide 1-phosphate intermediate (termed DS-1-P) to form tetraacyldisaccharide 1,4'-bis-phosphate (lipid IVA). The sequence is that of Tetraacyldisaccharide 4'-kinase from Psychrobacter cryohalolentis (strain ATCC BAA-1226 / DSM 17306 / VKM B-2378 / K5).